Here is a 128-residue protein sequence, read N- to C-terminus: Large ribosomal subunit protein bL20c (128 aa).

This sequence belongs to the bacterial ribosomal protein bL20 family.

Its subcellular location is the plastid. It is found in the chloroplast. In terms of biological role, binds directly to 23S ribosomal RNA and is necessary for the in vitro assembly process of the 50S ribosomal subunit. It is not involved in the protein synthesizing functions of that subunit. The chain is Large ribosomal subunit protein bL20c from Daucus carota (Wild carrot).